Consider the following 469-residue polypeptide: Tetratricopeptide repeat protein 38 (469 aa).

3 TPR repeats span residues 107–140 (REMLHVAAVETFANGNLPKAADLWERILQNHPTD), 179–212 (SYVKGMYSFGLLETNFYDQALKVAKEALAVDQTD), and 251–284 (CHVYWHWALYFIEKGDYEAALTLYDNHIAPQCFA).

The protein belongs to the TTC38 family.

The protein is Tetratricopeptide repeat protein 38 (ttc38) of Xenopus tropicalis (Western clawed frog).